The sequence spans 605 residues: Alanine--tRNA ligase (605 aa).

Histidine 463, histidine 467, cysteine 565, and histidine 569 together coordinate Zn(2+).

It belongs to the class-II aminoacyl-tRNA synthetase family. Zn(2+) serves as cofactor.

It localises to the cytoplasm. The catalysed reaction is tRNA(Ala) + L-alanine + ATP = L-alanyl-tRNA(Ala) + AMP + diphosphate. In terms of biological role, catalyzes the attachment of alanine to tRNA(Ala) in a two-step reaction: alanine is first activated by ATP to form Ala-AMP and then transferred to the acceptor end of tRNA(Ala). Also edits incorrectly charged Ser-tRNA(Ala) and Gly-tRNA(Ala) via its editing domain. In Treponema pallidum (strain Nichols), this protein is Alanine--tRNA ligase (alaS).